The sequence spans 290 residues: Sodium/potassium-transporting ATPase subunit beta-2 (290 aa).

Over 1–39 the chain is Cytoplasmic; that stretch reads MVIQKEKKSCGQVVEEWKEFVWNPRTHQFMGRTGTSWAF. A helical; Signal-anchor for type II membrane protein membrane pass occupies residues 40–67; the sequence is ILLFYLVFYGFLTAMFTLTMWVMLQTVS. The Extracellular portion of the chain corresponds to 68–290; that stretch reads EHTPKYQDRL…VAFKLRINKT (223 aa). N-linked (GlcNAc...) asparagine glycans are attached at residues Asn-96 and Asn-118. A disulfide bridge links Cys-129 with Cys-150. N-linked (GlcNAc...) asparagine glycosylation is found at Asn-153 and Asn-159. A disulfide bond links Cys-160 and Cys-177. N-linked (GlcNAc...) asparagine glycosylation is found at Asn-193, Asn-197, and Asn-238. An immunoglobulin-like region spans residues 193–290; that stretch reads NQSMNVTCAG…VAFKLRINKT (98 aa). An intrachain disulfide couples Cys-200 to Cys-261.

This sequence belongs to the X(+)/potassium ATPases subunit beta family. As to quaternary structure, the sodium/potassium-transporting ATPase is composed of a catalytic alpha subunit, an auxiliary non-catalytic beta subunit and an additional regulatory subunit. Interacts with BSG.

It localises to the cell membrane. Functionally, this is the non-catalytic component of the active enzyme, which catalyzes the hydrolysis of ATP coupled with the exchange of Na(+) and K(+) ions across the plasma membrane. The exact function of the beta-2 subunit is not known. In terms of biological role, mediates cell adhesion of neurons and astrocytes, and promotes neurite outgrowth. In Oryctolagus cuniculus (Rabbit), this protein is Sodium/potassium-transporting ATPase subunit beta-2 (ATP1B2).